A 338-amino-acid chain; its full sequence is Cytochrome c biogenesis protein CcsA (338 aa).

Transmembrane regions (helical) follow at residues 11–31, 39–59, 76–96, 100–120, 145–165, 244–264, 278–295, and 305–325; these read VLLD…YWLA, LLHE…TGLL, ESLF…EAFA, LVGV…SLTL, VMIL…AFLI, LIGL…VWAN, TWSL…HARI, and ATLA…VNFL.

Belongs to the CcmF/CycK/Ccl1/NrfE/CcsA family. As to quaternary structure, may interact with ccs1.

It localises to the cell inner membrane. Its function is as follows. Required during biogenesis of c-type cytochromes (cytochrome c6 and cytochrome f) at the step of heme attachment. In Gloeobacter violaceus (strain ATCC 29082 / PCC 7421), this protein is Cytochrome c biogenesis protein CcsA.